We begin with the raw amino-acid sequence, 339 residues long: DNA-directed RNA polymerase subunit alpha (339 aa).

Residues 1-233 (MVREEVAGST…DLFLPFLHAE (233 aa)) form an alpha N-terminal domain (alpha-NTD) region. The segment at 264-339 (KKGIPLNCIF…IDLLKNKLSF (76 aa)) is alpha C-terminal domain (alpha-CTD).

It belongs to the RNA polymerase alpha chain family. As to quaternary structure, in plastids the minimal PEP RNA polymerase catalytic core is composed of four subunits: alpha, beta, beta', and beta''. When a (nuclear-encoded) sigma factor is associated with the core the holoenzyme is formed, which can initiate transcription.

It is found in the plastid. It localises to the chloroplast. The catalysed reaction is RNA(n) + a ribonucleoside 5'-triphosphate = RNA(n+1) + diphosphate. In terms of biological role, DNA-dependent RNA polymerase catalyzes the transcription of DNA into RNA using the four ribonucleoside triphosphates as substrates. In Elymus californicus (California bottlebrush grass), this protein is DNA-directed RNA polymerase subunit alpha.